Consider the following 563-residue polypeptide: Light-independent protochlorophyllide reductase subunit B (563 aa).

Asp-36 serves as a coordination point for [4Fe-4S] cluster. The active-site Proton donor is Asp-293. 437-438 lines the substrate pocket; the sequence is GM. The segment at 459–478 is disordered; it reads ERREAEFGNQKVETGEPGTG.

The protein belongs to the ChlB/BchB/BchZ family. Protochlorophyllide reductase is composed of three subunits; BchL, BchN and BchB. Forms a heterotetramer of two BchB and two BchN subunits. The cofactor is [4Fe-4S] cluster.

The catalysed reaction is chlorophyllide a + oxidized 2[4Fe-4S]-[ferredoxin] + 2 ADP + 2 phosphate = protochlorophyllide a + reduced 2[4Fe-4S]-[ferredoxin] + 2 ATP + 2 H2O. The protein operates within porphyrin-containing compound metabolism; bacteriochlorophyll biosynthesis (light-independent). In terms of biological role, component of the dark-operative protochlorophyllide reductase (DPOR) that uses Mg-ATP and reduced ferredoxin to reduce ring D of protochlorophyllide (Pchlide) to form chlorophyllide a (Chlide). This reaction is light-independent. The NB-protein (BchN-BchB) is the catalytic component of the complex. This is Light-independent protochlorophyllide reductase subunit B from Roseiflexus castenholzii (strain DSM 13941 / HLO8).